A 383-amino-acid polypeptide reads, in one-letter code: Chaperone protein DnaJ (383 aa).

One can recognise a J domain in the interval 4–68 (DLYETLNVSR…DQRARYDRFG (65 aa)). Residues 139 to 221 (GGEKEITINH…CSGRGRNQKQ (83 aa)) form a CR-type zinc finger. 8 residues coordinate Zn(2+): Cys152, Cys155, Cys169, Cys172, Cys195, Cys198, Cys209, and Cys212. CXXCXGXG motif repeat units lie at residues 152 to 159 (CETCRGSG), 169 to 176 (CRNCGGQG), 195 to 202 (CPNCQGTG), and 209 to 216 (CPTCSGRG).

Belongs to the DnaJ family. As to quaternary structure, homodimer. Zn(2+) serves as cofactor.

It is found in the cytoplasm. Functionally, participates actively in the response to hyperosmotic and heat shock by preventing the aggregation of stress-denatured proteins and by disaggregating proteins, also in an autonomous, DnaK-independent fashion. Unfolded proteins bind initially to DnaJ; upon interaction with the DnaJ-bound protein, DnaK hydrolyzes its bound ATP, resulting in the formation of a stable complex. GrpE releases ADP from DnaK; ATP binding to DnaK triggers the release of the substrate protein, thus completing the reaction cycle. Several rounds of ATP-dependent interactions between DnaJ, DnaK and GrpE are required for fully efficient folding. Also involved, together with DnaK and GrpE, in the DNA replication of plasmids through activation of initiation proteins. This chain is Chaperone protein DnaJ, found in Gloeobacter violaceus (strain ATCC 29082 / PCC 7421).